A 193-amino-acid polypeptide reads, in one-letter code: Ion-translocating oxidoreductase complex subunit A (193 aa).

A run of 6 helical transmembrane segments spans residues 5–25 (LLLF…FLGL), 47–67 (FVMT…LIPL), 72–92 (LRTL…EMVV), 102–122 (LLGI…VALL), 134–154 (ALYG…FAAI), and 171–191 (AIAL…SGLV).

This sequence belongs to the NqrDE/RnfAE family. As to quaternary structure, the complex is composed of six subunits: RnfA, RnfB, RnfC, RnfD, RnfE and RnfG.

The protein resides in the cell inner membrane. Functionally, part of a membrane-bound complex that couples electron transfer with translocation of ions across the membrane. This chain is Ion-translocating oxidoreductase complex subunit A, found in Citrobacter koseri (strain ATCC BAA-895 / CDC 4225-83 / SGSC4696).